The chain runs to 186 residues: Large ribosomal subunit protein uL5 (186 aa).

The protein belongs to the universal ribosomal protein uL5 family. In terms of assembly, part of the 50S ribosomal subunit; part of the 5S rRNA/L5/L18/L25 subcomplex. Contacts the 5S rRNA and the P site tRNA. Forms a bridge to the 30S subunit in the 70S ribosome.

This is one of the proteins that bind and probably mediate the attachment of the 5S RNA into the large ribosomal subunit, where it forms part of the central protuberance. In the 70S ribosome it contacts protein S13 of the 30S subunit (bridge B1b), connecting the 2 subunits; this bridge is implicated in subunit movement. Contacts the P site tRNA; the 5S rRNA and some of its associated proteins might help stabilize positioning of ribosome-bound tRNAs. This is Large ribosomal subunit protein uL5 from Jannaschia sp. (strain CCS1).